A 369-amino-acid chain; its full sequence is Anthranilate phosphoribosyltransferase (369 aa).

Residues G99, 102–103 (GD), 109–112 (NVST), 127–135 (KHGNRGVSS), and S139 each bind 5-phospho-alpha-D-ribose 1-diphosphate. Position 99 (G99) interacts with anthranilate. Mg(2+) is bound at residue S111. N130 is an anthranilate binding site. R185 is an anthranilate binding site. Mg(2+) contacts are provided by D244 and E245.

It belongs to the anthranilate phosphoribosyltransferase family. In terms of assembly, homodimer. The cofactor is Mg(2+).

The catalysed reaction is N-(5-phospho-beta-D-ribosyl)anthranilate + diphosphate = 5-phospho-alpha-D-ribose 1-diphosphate + anthranilate. It participates in amino-acid biosynthesis; L-tryptophan biosynthesis; L-tryptophan from chorismate: step 2/5. Catalyzes the transfer of the phosphoribosyl group of 5-phosphorylribose-1-pyrophosphate (PRPP) to anthranilate to yield N-(5'-phosphoribosyl)-anthranilate (PRA). This is Anthranilate phosphoribosyltransferase from Psychrobacter sp. (strain PRwf-1).